The chain runs to 96 residues: ESAT-6-like protein EsxR (96 aa).

The protein belongs to the WXG100 family. ESAT-6 subfamily.

The protein resides in the secreted. The chain is ESAT-6-like protein EsxR from Mycobacterium leprae (strain TN).